Consider the following 262-residue polypeptide: MDINASRALANVYDLPDDFFPKIDDLVRDAKDALEPYWRSDSIKKHVLIATHFVDLIEDFWQTTQGMHEIAEALRAVIPPTTTPVPQGYLIQHDEAEEIPLGDLFKHQEERIVSFQPDYPITARIHAHLKAYAKINEESLDRARRLLWWHYNCLLWGEANVTNYISRLRTWLSTPERYRGRDAPTIEAITRPIQVAQGGRKTTSGTRKPRGLEPRRRKVKTTVVYGRRRSKSRERRAPTPQRAGSPLPRSSSSHHRSPSPRK.

Residues 183–262 (APTIEAITRP…SHHRSPSPRK (80 aa)) form a disordered region. The short motif at 215 to 233 (RRRKVKTTVVYGRRRSKSR) is the Bipartite nuclear localization signal element. The span at 215 to 234 (RRRKVKTTVVYGRRRSKSRE) shows a compositional bias: basic residues. A phosphoserine; by host mark is found at Ser-232 and Ser-245. Residues 252 to 262 (SSHHRSPSPRK) show a composition bias toward basic residues. Positions 254 to 260 (HHRSPSP) are RNA binding.

Belongs to the avihepadnavirus core antigen family. Homodimerizes, then multimerizes.

Its subcellular location is the virion. It is found in the host cytoplasm. Functionally, self assembles to form an icosahedral capsid. Most capsid appear to be large particles with an icosahedral symmetry of T=4 and consist of 240 copies of capsid protein, though a fraction forms smaller T=3 particles consisting of 180 capsid proteins. Entering capsid are transported along microtubules to the nucleus. Phosphorylation of the capsid is thought to induce exposure of nuclear localization signal in the C-terminal portion of the capsid protein that allows binding to the nuclear pore complex via the importin (karyopherin-) alpha and beta. Capsids are imported in intact form through the nuclear pore into the nuclear basket, where it probably binds NUP153. Only capsids that contain the mature viral genome can release the viral DNA and capsid protein into the nucleoplasm. Immature capsids get stucked in the basket. Capsids encapsulate the pre-genomic RNA and the P protein. Pre-genomic RNA is reverse transcribed into DNA while the capsid is still in the cytoplasm. The capsid can then either be directed to the nucleus, providing more genome for transcription, or bud through the endoplasmic reticulum to provide new virions. The polypeptide is Capsid protein (C) (Anas (ducks)).